The chain runs to 892 residues: MSSKRGADPDWKTPGKASKDKRPKTNAKKQKFRDEEYCKVCSDGGDLLCCDSCPSVYHRTCLSPPLKSIPKGDWICPRCIPLPGKAEKILSWRWALDRSVELRTSKGEKRREYFIKWHGMSYWHCEWIPEGQMLLHHASMVASFQRRSDMEEPSLEELDDQDGNLHERFYRYGIKPEWLLVQRVINHSEEPNGGTMYLVKWRELSYNDSSWERESDSIPGLNQAIALYKKLRSSNKGRQRDRPAPTIDLNKKYEDQPVFLKEAGLKLHPFQIEGVSWLRYSWGQGIPTILADEMGLGKTIQTVVFLYSLFKEGHCRGPFLISVPLSTLTNWERELELWAPELYCVTYVGGKTARAVIRKHEISFEEVTTKTMRENQTQYKFNVMLTSYEFISVDAAFLGCIDWAALVVDEAHRLRSNQSKFFRILSKYRIGYKLLLTGTPLQNNLEELFHLLNFLSSGKFNDLQTFQAEFTDVSKEEQVKRLHEILEPHMLRRLKADVLKSMPPKSEFIVRVELSSMQKKFYKHILTKNFKALNQKGGGRVCSLLNIMMDLRKCCNHPYLFPSAAEEATISPSGLYEMSSLTKASGKLDLLSKMLKQLKADNHRVLLFSQMTKMLNVLEHFLEGEGYQYDRIDGSIKGDLRQKAIDRFNDPVSEHFVFLLSTRAGGLGINLATADTVIIFDSDWNPHNDVQAFSRAHRMGQKKKVMIYRFVTHNSVEERIMQVAKHKMMLTHLVVRPGMGGMTTNFSKDELEDILRFGTEDLFKDGKSEAIHYDDKAVADLLDRTNRGIEEKESWANEYLSSFKVASYATKEDHEEHDDYNNDAENTDPFYWENLMGKSQPKLPKKQKKQSQQSQVDVESIMGKGKRIRKEIDYSNQYPSPNRATPSSIVLM.

Basic and acidic residues predominate over residues 1 to 20 (MSSKRGADPDWKTPGKASKD). The disordered stretch occupies residues 1–29 (MSSKRGADPDWKTPGKASKDKRPKTNAKK). A PHD-type zinc finger spans residues 35–82 (EEYCKVCSDGGDLLCCDSCPSVYHRTCLSPPLKSIPKGDWICPRCIPL). 2 Chromo domains span residues 84–156 (GKAE…PSLE) and 179–240 (LLVQ…GRQR). The region spanning 279–458 (RYSWGQGIPT…FHLLNFLSSG (180 aa)) is the Helicase ATP-binding domain. Residue 292–299 (DEMGLGKT) coordinates ATP. The DEAH box signature appears at 409-412 (DEAH). The region spanning 590-739 (LLSKMLKQLK…LTHLVVRPGM (150 aa)) is the Helicase C-terminal domain. Positions 839 to 892 (SQPKLPKKQKKQSQQSQVDVESIMGKGKRIRKEIDYSNQYPSPNRATPSSIVLM) are disordered. Residues 874 to 892 (YSNQYPSPNRATPSSIVLM) show a composition bias toward polar residues.

This sequence belongs to the SNF2/RAD54 helicase family. Monomer.

It is found in the nucleus. The protein resides in the chromosome. The enzyme catalyses ATP + H2O = ADP + phosphate + H(+). Its activity is regulated as follows. ATPase activity is stimulated by binding to DNA or nucleosomes, but is strongly activated by nucleosomes. ATP-dependent chromatin-remodeling factor which acts in nucleosome-remodeling by catalyzing ATP-dependent nucleosome mobilization. Likely to be involved in the regulation of transcription. This Drosophila melanogaster (Fruit fly) protein is Chromodomain-helicase-DNA-binding protein 3.